The primary structure comprises 648 residues: Threonine--tRNA ligase (648 aa).

Residues 1–61 (MIDIILPDGS…INTATVKAIT (61 aa)) enclose the TGS domain. Residues 243–549 (DHRKLGRELE…LIEHYSGKLP (307 aa)) form a catalytic region. Positions 349, 400, and 526 each coordinate Zn(2+).

Belongs to the class-II aminoacyl-tRNA synthetase family. Homodimer. Zn(2+) is required as a cofactor.

Its subcellular location is the cytoplasm. It catalyses the reaction tRNA(Thr) + L-threonine + ATP = L-threonyl-tRNA(Thr) + AMP + diphosphate + H(+). Functionally, catalyzes the attachment of threonine to tRNA(Thr) in a two-step reaction: L-threonine is first activated by ATP to form Thr-AMP and then transferred to the acceptor end of tRNA(Thr). Also edits incorrectly charged L-seryl-tRNA(Thr). This Orientia tsutsugamushi (strain Ikeda) (Rickettsia tsutsugamushi) protein is Threonine--tRNA ligase.